Here is a 256-residue protein sequence, read N- to C-terminus: Dihydromonacolin L-[lovastatin nonaketide synthase] thioesterase (256 aa).

Active-site charge relay system residues include S122, D201, and H229.

Belongs to the LovG family.

It carries out the reaction dihydromonacolin L-[lovastatin nonaketide synthase] + H2O = holo-[lovastatin nonaketide synthase] + dihydromonacolin L carboxylate + H(+). The protein operates within polyketide biosynthesis; lovastatin biosynthesis. Functionally, esterase; part of the gene cluster that mediates the biosynthesis of lovastatin (also known as mevinolin, mevacor or monacolin K), a hypolipidemic inhibitor of (3S)-hydroxymethylglutaryl-coenzyme A (HMG-CoA) reductase (HMGR). The first step in the biosynthesis of lovastatin is the production of dihydromonacolin L acid by the lovastatin nonaketide synthase lovB and the trans-acting enoyl reductase lovC via condensation of one acetyl-CoA unit and 8 malonyl-CoA units. Dihydromonacolin L acid is released from lovB by the thioesterase lovG. Next, dihydromonacolin L acid is oxidized by the dihydromonacolin L monooxygenase lovA twice to form monacolin J acid. The 2-methylbutyrate moiety of lovastatin is synthesized by the lovastatin diketide synthase lovF via condensation of one acetyl-CoA unit and one malonyl-CoA unit. Finally, the covalent attachment of this moiety to monacolin J acid is catalyzed by the transesterase lovD to yield lovastatin. LovD has broad substrate specificity and can also convert monacolin J to simvastatin using alpha-dimethylbutanoyl-S-methyl-3-mercaptopropionate (DMB-S-MMP) as the thioester acyl donor, and can also catalyze the reverse reaction and function as hydrolase in vitro. LovD has much higher activity with LovF-bound 2-methylbutanoate than with free diketide substrates. Esterase that catalyzes the release of covalently bound dihydromonacolin L from LovB during lovastatin biosynthesis. This chain is Dihydromonacolin L-[lovastatin nonaketide synthase] thioesterase, found in Aspergillus terreus (strain NIH 2624 / FGSC A1156).